A 629-amino-acid chain; its full sequence is 5-aminolevulinate synthase, mitochondrial (629 aa).

The N-terminal 69 residues, 1–69 (MDSVLRQSKA…VQSARTGGRA (69 aa)), are a transit peptide targeting the mitochondrion. The substrate site is built by Arg155, Ser268, and Lys287. Pyridoxal 5'-phosphate is bound by residues Ser320, His348, and Thr388. The active site involves Lys391. Lys391 carries the post-translational modification N6-(pyridoxal phosphate)lysine. 2 residues coordinate pyridoxal 5'-phosphate: Thr420 and Thr421. Thr506 contacts substrate.

Belongs to the class-II pyridoxal-phosphate-dependent aminotransferase family. Homodimer. Pyridoxal 5'-phosphate serves as cofactor.

The protein resides in the mitochondrion matrix. The catalysed reaction is succinyl-CoA + glycine + H(+) = 5-aminolevulinate + CO2 + CoA. Its pathway is porphyrin-containing compound metabolism; protoporphyrin-IX biosynthesis; 5-aminolevulinate from glycine: step 1/1. Functionally, catalyzes the synthesis of 5-aminolevulinate (ALA) from succinyl-CoA and glycine, the first and rate-limiting step in heme biosynthesis. The polypeptide is 5-aminolevulinate synthase, mitochondrial (alv-1) (Neurospora crassa (strain ATCC 24698 / 74-OR23-1A / CBS 708.71 / DSM 1257 / FGSC 987)).